A 151-amino-acid chain; its full sequence is Deoxyuridine 5'-triphosphate nucleotidohydrolase (151 aa).

Substrate contacts are provided by residues 70-72 (RSG), asparagine 83, 87-89 (LID), and methionine 97.

The protein belongs to the dUTPase family. Mg(2+) is required as a cofactor.

It catalyses the reaction dUTP + H2O = dUMP + diphosphate + H(+). It participates in pyrimidine metabolism; dUMP biosynthesis; dUMP from dCTP (dUTP route): step 2/2. Functionally, this enzyme is involved in nucleotide metabolism: it produces dUMP, the immediate precursor of thymidine nucleotides and it decreases the intracellular concentration of dUTP so that uracil cannot be incorporated into DNA. The chain is Deoxyuridine 5'-triphosphate nucleotidohydrolase from Shigella sonnei (strain Ss046).